A 617-amino-acid chain; its full sequence is UvrABC system protein C (617 aa).

Residues 22–100 (NLPGVYRFFN…IKALSPKYNI (79 aa)) enclose the GIY-YIG domain. The UVR domain maps to 209-244 (DELTRTLQHKMQTAAANLQFEEAARYRDQIQALGIM).

Belongs to the UvrC family. In terms of assembly, interacts with UvrB in an incision complex.

Its subcellular location is the cytoplasm. The UvrABC repair system catalyzes the recognition and processing of DNA lesions. UvrC both incises the 5' and 3' sides of the lesion. The N-terminal half is responsible for the 3' incision and the C-terminal half is responsible for the 5' incision. The protein is UvrABC system protein C of Neisseria meningitidis serogroup B (strain ATCC BAA-335 / MC58).